Consider the following 114-residue polypeptide: Large ribosomal subunit protein uL18 (114 aa).

This sequence belongs to the universal ribosomal protein uL18 family. Part of the 50S ribosomal subunit; part of the 5S rRNA/L5/L18/L25 subcomplex. Contacts the 5S and 23S rRNAs.

Its function is as follows. This is one of the proteins that bind and probably mediate the attachment of the 5S RNA into the large ribosomal subunit, where it forms part of the central protuberance. The chain is Large ribosomal subunit protein uL18 from Bacteroides thetaiotaomicron (strain ATCC 29148 / DSM 2079 / JCM 5827 / CCUG 10774 / NCTC 10582 / VPI-5482 / E50).